Here is a 438-residue protein sequence, read N- to C-terminus: Serine hydroxymethyltransferase 1 (438 aa).

(6S)-5,6,7,8-tetrahydrofolate contacts are provided by residues Leu130 and 134-136 (GHL). N6-(pyridoxal phosphate)lysine is present on Lys239.

It belongs to the SHMT family. In terms of assembly, homodimer. Requires pyridoxal 5'-phosphate as cofactor.

Its subcellular location is the cytoplasm. It catalyses the reaction (6R)-5,10-methylene-5,6,7,8-tetrahydrofolate + glycine + H2O = (6S)-5,6,7,8-tetrahydrofolate + L-serine. Its pathway is one-carbon metabolism; tetrahydrofolate interconversion. It participates in amino-acid biosynthesis; glycine biosynthesis; glycine from L-serine: step 1/1. Its function is as follows. Catalyzes the reversible interconversion of serine and glycine with tetrahydrofolate (THF) serving as the one-carbon carrier. This reaction serves as the major source of one-carbon groups required for the biosynthesis of purines, thymidylate, methionine, and other important biomolecules. Also exhibits THF-independent aldolase activity toward beta-hydroxyamino acids, producing glycine and aldehydes, via a retro-aldol mechanism. The protein is Serine hydroxymethyltransferase 1 of Mycobacterium tuberculosis (strain CDC 1551 / Oshkosh).